The chain runs to 82 residues: MSGTTGERPFSDIITSVRYWVIHSITIPALFIAGWLFVSTGLAYDAFGTPRPNEYFTPARQEVPIVKNRFEAKKQVEQFIGK.

The helical transmembrane segment at 21–35 threads the bilayer; that stretch reads VIHSITIPALFIAGW. Position 23 (His-23) interacts with heme.

It belongs to the PsbE/PsbF family. Heterodimer of an alpha subunit and a beta subunit. PSII is composed of 1 copy each of membrane proteins PsbA, PsbB, PsbC, PsbD, PsbE, PsbF, PsbH, PsbI, PsbJ, PsbK, PsbL, PsbM, PsbT, PsbX, PsbY, PsbZ, Psb30/Ycf12, peripheral proteins PsbO, CyanoQ (PsbQ), PsbU, PsbV and a large number of cofactors. It forms dimeric complexes. The cofactor is heme b.

It is found in the cellular thylakoid membrane. This b-type cytochrome is tightly associated with the reaction center of photosystem II (PSII). PSII is a light-driven water:plastoquinone oxidoreductase that uses light energy to abstract electrons from H(2)O, generating O(2) and a proton gradient subsequently used for ATP formation. It consists of a core antenna complex that captures photons, and an electron transfer chain that converts photonic excitation into a charge separation. The protein is Cytochrome b559 subunit alpha of Nostoc punctiforme (strain ATCC 29133 / PCC 73102).